The primary structure comprises 255 residues: 28.1 kDa virulence protein (255 aa).

The protein belongs to the SpvA family.

Not known. This protein is involved in the virulence of salmonellas. The sequence is that of 28.1 kDa virulence protein (mkaB) from Salmonella typhimurium.